The chain runs to 810 residues: Valine--tRNA ligase (810 aa).

The short motif at 45–55 is the 'HIGH' region element; sequence PTISGQLHIGH. The short motif at 534 to 538 is the 'KMSKS' region element; sequence KMSKS. ATP is bound at residue Lys-537.

It belongs to the class-I aminoacyl-tRNA synthetase family. ValS type 2 subfamily. Monomer.

The protein resides in the cytoplasm. The enzyme catalyses tRNA(Val) + L-valine + ATP = L-valyl-tRNA(Val) + AMP + diphosphate. Catalyzes the attachment of valine to tRNA(Val). As ValRS can inadvertently accommodate and process structurally similar amino acids such as threonine, to avoid such errors, it has a 'posttransfer' editing activity that hydrolyzes mischarged Thr-tRNA(Val) in a tRNA-dependent manner. The sequence is that of Valine--tRNA ligase from Ehrlichia ruminantium (strain Welgevonden).